A 430-amino-acid chain; its full sequence is uncharacterized protein (430 aa).

Helical transmembrane passes span 18–38 (LFLL…NTFV), 49–69 (FIDL…TFYL), 80–100 (VFIL…VLLA), 109–129 (VLIG…FNVL), 145–165 (FMGI…GFVI), 175–195 (TVIF…SFFL), 235–255 (IFVF…LALG), 256–276 (TFGL…SRLI), 285–305 (ILLG…HMSF), 307–327 (TLLT…VPYV), 353–373 (MFLN…VALL), and 377–397 (VGIP…YYFV). The interval 407 to 430 (GENETMEEDGQKRVTEPTLLKGER) is disordered. Over residues 415-430 (DGQKRVTEPTLLKGER) the composition is skewed to basic and acidic residues.

Its subcellular location is the cell membrane. This is an uncharacterized protein from Bacillus subtilis (strain 168).